Reading from the N-terminus, the 680-residue chain is Methionine--tRNA ligase (680 aa).

The 'HIGH' region motif lies at 15–25; that stretch reads PYANGPVHIGH. Cys147, Cys150, Cys160, and Cys163 together coordinate Zn(2+). The 'KMSKS' region motif lies at 332-336; sequence KISTS. Thr335 is an ATP binding site. The 102-residue stretch at 579 to 680 folds into the tRNA-binding domain; the sequence is DFLKLDIRVG…AEVAAGSQVK (102 aa).

This sequence belongs to the class-I aminoacyl-tRNA synthetase family. MetG type 1 subfamily. Homodimer. Zn(2+) serves as cofactor.

It localises to the cytoplasm. It carries out the reaction tRNA(Met) + L-methionine + ATP = L-methionyl-tRNA(Met) + AMP + diphosphate. In terms of biological role, is required not only for elongation of protein synthesis but also for the initiation of all mRNA translation through initiator tRNA(fMet) aminoacylation. In Porphyromonas gingivalis (strain ATCC BAA-308 / W83), this protein is Methionine--tRNA ligase.